Consider the following 108-residue polypeptide: Phosphoribosyl-AMP cyclohydrolase (108 aa).

Mg(2+) is bound at residue aspartate 78. Zn(2+) is bound at residue cysteine 79. Aspartate 80 and aspartate 82 together coordinate Mg(2+). Residues cysteine 95 and cysteine 102 each contribute to the Zn(2+) site.

It belongs to the PRA-CH family. As to quaternary structure, homodimer. Mg(2+) serves as cofactor. Requires Zn(2+) as cofactor.

The protein localises to the cytoplasm. The catalysed reaction is 1-(5-phospho-beta-D-ribosyl)-5'-AMP + H2O = 1-(5-phospho-beta-D-ribosyl)-5-[(5-phospho-beta-D-ribosylamino)methylideneamino]imidazole-4-carboxamide. The protein operates within amino-acid biosynthesis; L-histidine biosynthesis; L-histidine from 5-phospho-alpha-D-ribose 1-diphosphate: step 3/9. In terms of biological role, catalyzes the hydrolysis of the adenine ring of phosphoribosyl-AMP. The sequence is that of Phosphoribosyl-AMP cyclohydrolase from Cenarchaeum symbiosum (strain A).